Reading from the N-terminus, the 32-residue chain is Defensin-3 (32 aa).

3 disulfide bridges follow: C3–C31, C5–C20, and C10–C30.

The protein resides in the secreted. Its function is as follows. Has antibacterial activity against the Gram-negative bacterium E.coli and the Gram-positive bacteria L.monocytogenes and S.aureus. Has antifungal activity against C.albicans. This chain is Defensin-3, found in Papio hamadryas (Hamadryas baboon).